Here is a 448-residue protein sequence, read N- to C-terminus: Enolase (448 aa).

Gln-164 is a (2R)-2-phosphoglycerate binding site. The active-site Proton donor is the Glu-206. 3 residues coordinate Mg(2+): Asp-243, Glu-289, and Asp-316. 4 residues coordinate (2R)-2-phosphoglycerate: Lys-341, Arg-370, Ser-371, and Lys-392. Lys-341 serves as the catalytic Proton acceptor.

It belongs to the enolase family. Mg(2+) is required as a cofactor.

The protein localises to the cytoplasm. Its subcellular location is the secreted. It is found in the cell surface. The enzyme catalyses (2R)-2-phosphoglycerate = phosphoenolpyruvate + H2O. The protein operates within carbohydrate degradation; glycolysis; pyruvate from D-glyceraldehyde 3-phosphate: step 4/5. Catalyzes the reversible conversion of 2-phosphoglycerate (2-PG) into phosphoenolpyruvate (PEP). It is essential for the degradation of carbohydrates via glycolysis. This is Enolase from Oenococcus oeni (strain ATCC BAA-331 / PSU-1).